The primary structure comprises 110 residues: Early nodulin-12A (110 aa).

The signal sequence occupies residues methionine 1–alanine 24. The disordered stretch occupies residues valine 31–phenylalanine 110. Positions tyrosine 32–lysine 43 are enriched in pro residues. A run of 3 repeats spans residues proline 34–glycine 38, proline 39–lysine 43, and proline 44–glutamate 48. The 11 X 5 AA approximate tandem repeats of P-P-[VQRH]-[NKH]-[GKE] stretch occupies residues proline 34 to lysine 88. Basic and acidic residues predominate over residues proline 45–arginine 81. One copy of the 4; approximate repeat lies at threonine 49–lysine 53. The stretch at proline 54–glutamate 58 is repeat 5. The 6; approximate repeat unit spans residues threonine 59 to lysine 63. Repeat copies occupy residues proline 64–glutamate 68, proline 69–lysine 73, proline 74–glutamate 78, proline 79–lysine 83, and proline 84–lysine 88. The segment covering histidine 82–valine 93 has biased composition (basic residues). Basic and acidic residues predominate over residues histidine 101–phenylalanine 110.

This sequence belongs to the plant proline-rich protein superfamily. ENOD12 family. As to expression, root nodules, stem and flower.

The protein resides in the secreted. It is found in the cell wall. Its function is as follows. Involved in the infection process during the plant-rhizobium interaction. The chain is Early nodulin-12A (ENOD12A) from Pisum sativum (Garden pea).